A 218-amino-acid chain; its full sequence is GTP cyclohydrolase 1 (218 aa).

Residues Cys-109, His-112, and Cys-180 each contribute to the Zn(2+) site.

The protein belongs to the GTP cyclohydrolase I family. As to quaternary structure, toroid-shaped homodecamer, composed of two pentamers of five dimers.

It catalyses the reaction GTP + H2O = 7,8-dihydroneopterin 3'-triphosphate + formate + H(+). It participates in cofactor biosynthesis; 7,8-dihydroneopterin triphosphate biosynthesis; 7,8-dihydroneopterin triphosphate from GTP: step 1/1. The chain is GTP cyclohydrolase 1 from Haemophilus influenzae (strain 86-028NP).